Reading from the N-terminus, the 1486-residue chain is MIERGKFRSLTLINWNGFFARTFDLDELVTTLSGGNGAGKSTTMAAFVTALIPDLTLLHFRNTTEAGATSGSRDKGLHGKLKAGVCYSMLDTINSRHQRVVVGVRLQQVAGRDRKVDIKPFAIQGLPMSVLPTQLVTETLNERQARVLPLNELKDKLEAMEGVQFKQFNSITDYHSLMFDLGIIARRLRSASDRSKFYRLIEASLYGGISSAITRSLRDYLLPENSGVRKAFQDMEAALRENRMTLEAIRVTQSDRDLFKHLISEATNYVAADYMRHANERRVHLDKALEFRRELHTSRQQLAAEQYKHVDMARELAEHNGAEGDLEADYQAASDHLNLVQTALRQQEKIERYEADLDELQIRLEEQNEVVAEAIERQEENEARAEAAELEVDELKSQLADYQQALDVQQTRAIQYNQAVAALNRAKELCHLPDLTADSAAEWLETFQAKELEATEKMLSLEQKMSMAQTAHSQFEQAYQLVVAINGPLARNEAWDVARELLREGVDQRHLAEQVQPLRMRLSELEQRLREQQEAERLLADFCKRQGKNFDIDELEALHQELEARIASLSDSVSNAREERMALRQEQEQLQSRIQSLMQRAPVWLAAQNSLNQLSEQCGEEFSSSQDVTEYLQQLLEREREAIVERDEVGARKNAVDEEIERLSQPGGSEDQRLNALAERFGGVLLSEIYDDVSLEDAPYFSALYGPSRHAIVVPDLSQVTEHLEGLTDCPEDLYLIEGDPQSFDDSVFSVDELEKAVVVKIADRQWRYSRFPEVPLFGRAARESRIESLHAEREVLSERFATLSFDVQKTQRLHQAFSRFIGSHLAVAFESDPEAEIRQLNSRRVELERALSNHENDNQQQRIQFEQAKEGVTALNRILPRLNLLADDSLADRVDEIRERLDEAQEAARFVQQFGNQLAKLEPIVSVLQSDPEQFEQLKEDYAYSQQMQRDARQQAFALTEVVQRRAHFSYSDSAEMLSGNSDLNEKLRERLEQAEAERTRAREALRGHAAQLSQYNQVLASLKSSYDTKKELLNDLQRELQDIGVRADSGAEERARIRRDELHAQLSNNRSRRNQLEKALTFCEAEMDNLTRKLRKLERDYFEMREQVVTAKAGWCAVMRMVKDNGVERRLHRRELAYLSADDLRSMSDKALGALRLAVADNEHLRDVLRMSEDPKRPERKIQFFVAVYQHLRERIRQDIIRTDDPVEAIEQMEIELSRLTEELTSREQKLAISSRSVANIIRKTIQREQNRIRMLNQGLQNVSFGQVNSVRLNVNVRETHAMLLDVLSEQHEQHQDLFNSNRLTFSEALAKLYQRLNPQIDMGQRTPQTIGEELLDYRNYLEMEVEVNRGSDGWLRAESGALSTGEAIGTGMSILVMVVQSWEDESRRLRGKDISPCRLLFLDEAARLDARSIATLFELCERLQMQLIIAAPENISPEKGTTYKLVRKVFQNTEHVHVVGLRGFAPQLPETLPGSDEAPSQAS.

ATP is bound at residue 34-41 (GGNGAGKS). Coiled-coil stretches lie at residues 326 to 418 (LEAD…QYNQ), 444 to 480 (LETF…QAYQ), and 509 to 603 (RHLA…RAPV). The tract at residues 666-783 (PGGSEDQRLN…EVPLFGRAAR (118 aa)) is flexible hinge. Coiled-coil stretches lie at residues 835–923 (EAEI…AKLE), 977–1115 (EMLS…TAKA), and 1209–1266 (VEAI…QNVS).

This sequence belongs to the SMC family. MukB subfamily. As to quaternary structure, homodimerization via its hinge domain. Binds to DNA via its C-terminal region. Interacts, and probably forms a ternary complex, with MukE and MukF via its C-terminal region. The complex formation is stimulated by calcium or magnesium. Interacts with tubulin-related protein FtsZ.

It localises to the cytoplasm. It is found in the nucleoid. In terms of biological role, plays a central role in chromosome condensation, segregation and cell cycle progression. Functions as a homodimer, which is essential for chromosome partition. Involved in negative DNA supercoiling in vivo, and by this means organize and compact chromosomes. May achieve or facilitate chromosome segregation by condensation DNA from both sides of a centrally located replisome during cell division. The chain is Chromosome partition protein MukB from Escherichia coli O17:K52:H18 (strain UMN026 / ExPEC).